Reading from the N-terminus, the 142-residue chain is SPbeta prophage-derived deoxyuridine 5'-triphosphate nucleotidohydrolase YosS (142 aa).

Residues Ser62 and Asn74 each contribute to the dUMP site. The Proton acceptor role is filled by Asp80. DUMP contacts are provided by Tyr83 and Phe91.

This sequence belongs to the dUTPase family. In terms of assembly, homotrimer. Mg(2+) serves as cofactor.

It carries out the reaction dUTP + H2O = dUMP + diphosphate + H(+). It functions in the pathway pyrimidine metabolism; dUMP biosynthesis; dUMP from dCTP (dUTP route): step 2/2. Functionally, involved in nucleotide metabolism: produces dUMP, the immediate precursor of thymidine nucleotides and decreases the intracellular concentration of dUTP, so that uracil cannot be incorporated into DNA. The Ser-62 side chain changes its position upon ligand-binding to make contacts with the nucleotide phosphates. This is SPbeta prophage-derived deoxyuridine 5'-triphosphate nucleotidohydrolase YosS from Bacillus subtilis (strain 168).